Consider the following 377-residue polypeptide: Protein RecA (377 aa).

82–89 (GPESSGKT) is an ATP binding site. The disordered stretch occupies residues 345–377 (EGSEVSANSMRPLASAARQASSRPNLSQVSANG). Polar residues predominate over residues 362-377 (RQASSRPNLSQVSANG).

The protein belongs to the RecA family.

It localises to the cytoplasm. Its function is as follows. Can catalyze the hydrolysis of ATP in the presence of single-stranded DNA, the ATP-dependent uptake of single-stranded DNA by duplex DNA, and the ATP-dependent hybridization of homologous single-stranded DNAs. It interacts with LexA causing its activation and leading to its autocatalytic cleavage. The chain is Protein RecA from Prochlorococcus marinus (strain NATL2A).